The chain runs to 380 residues: Cytochrome b (380 aa).

4 helical membrane-spanning segments follow: residues 34 to 54 (FGSLLGLCLMTQILTGLLLAM), 78 to 99 (WLIRNLHANGASFFFICIYLHI), 114 to 134 (WNTGVILLLTLMATAFVGYVL), and 179 to 199 (FFALHFLLPFMIAGLTLIHLT). Positions 84 and 98 each coordinate heme b. Heme b-binding residues include H183 and H197. Position 202 (H202) interacts with a ubiquinone. Transmembrane regions (helical) follow at residues 227-247 (TKDLLGFLLMIAPLLTLAMFS), 289-309 (LGGVLALAASVLILFLAPFLH), 321-341 (LSQLLFWILVANLLILTWVGS), and 348-368 (FIIIGQIASLTYFTILLILFP).

The protein belongs to the cytochrome b family. The cytochrome bc1 complex contains 11 subunits: 3 respiratory subunits (MT-CYB, CYC1 and UQCRFS1), 2 core proteins (UQCRC1 and UQCRC2) and 6 low-molecular weight proteins (UQCRH/QCR6, UQCRB/QCR7, UQCRQ/QCR8, UQCR10/QCR9, UQCR11/QCR10 and a cleavage product of UQCRFS1). This cytochrome bc1 complex then forms a dimer. Heme b is required as a cofactor.

Its subcellular location is the mitochondrion inner membrane. Its function is as follows. Component of the ubiquinol-cytochrome c reductase complex (complex III or cytochrome b-c1 complex) that is part of the mitochondrial respiratory chain. The b-c1 complex mediates electron transfer from ubiquinol to cytochrome c. Contributes to the generation of a proton gradient across the mitochondrial membrane that is then used for ATP synthesis. This Amazilia tzacatl (Rufous-tailed hummingbird) protein is Cytochrome b (MT-CYB).